The primary structure comprises 148 residues: Lysozyme C (148 aa).

The first 18 residues, 1-18, serve as a signal peptide directing secretion; the sequence is MKVLVILGLVLLSVMVQG. The C-type lysozyme domain maps to 19-148; it reads KVFERCELAR…VSQYVQGCGV (130 aa). 4 disulfides stabilise this stretch: cysteine 24–cysteine 146, cysteine 48–cysteine 134, cysteine 83–cysteine 99, and cysteine 95–cysteine 113. Catalysis depends on residues glutamate 53 and aspartate 71.

This sequence belongs to the glycosyl hydrolase 22 family. Monomer.

The protein localises to the secreted. The enzyme catalyses Hydrolysis of (1-&gt;4)-beta-linkages between N-acetylmuramic acid and N-acetyl-D-glucosamine residues in a peptidoglycan and between N-acetyl-D-glucosamine residues in chitodextrins.. In terms of biological role, lysozymes have primarily a bacteriolytic function; those in tissues and body fluids are associated with the monocyte-macrophage system and enhance the activity of immunoagents. This Saimiri sciureus (Common squirrel monkey) protein is Lysozyme C (LYZ).